Here is a 160-residue protein sequence, read N- to C-terminus: UPF0178 protein XC_1827 (160 aa).

Belongs to the UPF0178 family.

The sequence is that of UPF0178 protein XC_1827 from Xanthomonas campestris pv. campestris (strain 8004).